Reading from the N-terminus, the 349-residue chain is Protein RecA (349 aa).

65-72 contributes to the ATP binding site; it reads GPESSGKT.

This sequence belongs to the RecA family.

It localises to the cytoplasm. Can catalyze the hydrolysis of ATP in the presence of single-stranded DNA, the ATP-dependent uptake of single-stranded DNA by duplex DNA, and the ATP-dependent hybridization of homologous single-stranded DNAs. It interacts with LexA causing its activation and leading to its autocatalytic cleavage. The protein is Protein RecA of Azotobacter vinelandii.